A 570-amino-acid chain; its full sequence is Periplasmic trehalase (570 aa).

The first 34 residues, 1-34 (MIPPEIRRSVLLQKAIKLALAGTLLTFASFSATA), serve as a signal peptide directing secretion. Substrate-binding positions include arginine 159, 166–167 (WD), asparagine 203, 212–214 (RSQ), 284–286 (RPE), and glycine 317. Catalysis depends on proton donor/acceptor residues aspartate 319 and glutamate 503. Glutamate 518 contacts substrate. The segment at 545–570 (PCDSVPSTRPASLSATPTKTPSAATQ) is disordered. Positions 554–570 (PASLSATPTKTPSAATQ) are enriched in low complexity.

The protein belongs to the glycosyl hydrolase 37 family. As to quaternary structure, monomer.

It is found in the periplasm. The enzyme catalyses alpha,alpha-trehalose + H2O = alpha-D-glucose + beta-D-glucose. Its function is as follows. Provides the cells with the ability to utilize trehalose at high osmolarity by splitting it into glucose molecules that can subsequently be taken up by the phosphotransferase-mediated uptake system. The chain is Periplasmic trehalase from Salmonella agona (strain SL483).